A 78-amino-acid polypeptide reads, in one-letter code: NEDD8-like protein RUB3 (78 aa).

Residue glycine 76 forms a Glycyl lysine isopeptide (Gly-Lys) (interchain with K-? in acceptor proteins) linkage. The propeptide occupies 77–78 (CC).

In terms of tissue distribution, detected in stems and flower buds, but not in leaves, mature flowers and seedlings.

Functionally, may function as a stable post-translational protein modifier. The polypeptide is NEDD8-like protein RUB3 (RUB3) (Arabidopsis thaliana (Mouse-ear cress)).